The chain runs to 199 residues: Thymidine kinase (199 aa).

ATP-binding positions include glycine 15–serine 22 and aspartate 88–glutamine 91. Glutamate 89 functions as the Proton acceptor in the catalytic mechanism. Positions 145, 148, 183, and 186 each coordinate Zn(2+).

Belongs to the thymidine kinase family. As to quaternary structure, homotetramer.

The protein resides in the cytoplasm. It carries out the reaction thymidine + ATP = dTMP + ADP + H(+). The protein is Thymidine kinase of Staphylococcus aureus (strain Mu50 / ATCC 700699).